Consider the following 718-residue polypeptide: U-box domain-containing protein 5 (718 aa).

A U-box domain is found at 218-292; that stretch reads TLPEKFKCTL…SEWCAKNGLD (75 aa). 3 ARM repeats span residues 493–532, 534–571, and 573–613; these read PHGP…NLSS, MEIC…NLCS, and EKGR…QLCV. Positions 662–704 are disordered; it reads KEEEEEVSSRPEGRTTASPTSQVVTPVTHPEPVKITPSPKKSG. Over residues 676–686 the composition is skewed to polar residues; the sequence is TTASPTSQVVT.

The enzyme catalyses S-ubiquitinyl-[E2 ubiquitin-conjugating enzyme]-L-cysteine + [acceptor protein]-L-lysine = [E2 ubiquitin-conjugating enzyme]-L-cysteine + N(6)-ubiquitinyl-[acceptor protein]-L-lysine.. It functions in the pathway protein modification; protein ubiquitination. In terms of biological role, functions as an E3 ubiquitin ligase. The polypeptide is U-box domain-containing protein 5 (PUB5) (Arabidopsis thaliana (Mouse-ear cress)).